Reading from the N-terminus, the 638-residue chain is MIYPDRFDVIVIGGGHAGTEACLAAARMGCKTLLLSHNIETLGQMSCNPAIGGIGKSHLVKEIDALGGAMALATDKGGIQFRVLNARKGPAVRATRAQADRILYKAAIRHTLENQPNLWIFQQAVDDLIVEQDQVRGVVTQMGLKFMADQVVLTAGTFLGGLIHIGLENYSGGRAGDPPSIALSRRLRELPLRVDRLKTGTPPRIDARTVNFDLLEKQWGDEPRPVMSVRGNRAMQPPQICCYITHTNERTHEVIRNNLDRSPMYSGVIEGIGPRYCPSIEDKIHRFADKDSHQVFIEPEGLTTHELYPNGISTSLPFDVQLQIVRSMRGFENAHILRPGYAIEYDFFNPQDLQHSLETRVIGGLFFAGQINGTTGYEEAGAQGLLAGINAALRAQGKAAWCPTRDQAYMGVLVDDLITLGTKEPYRMFTSRAEYRLLLREDNADLRLTEKGRELGLIGDEQWQLFCEKREQIALEQQRLKSTWIQAGSAEAEQIEAKINVRLAREYSLMDLLKRPELNYADVASLKGEPLAGEAAAEQVEIEAKYAGYIDRQQDDINRLRAYENTLIPEDLDYAQVEGLSNEVKQKLSAARPQTLARAARISGITPAAISLVLVYLKKRGLLKRLKDDHPVPEQQAG.

Residues 13-18 (GGGHAG), valine 125, and serine 180 each bind FAD. 273–287 (GPRYCPSIEDKIHRF) contributes to the NAD(+) binding site. Residue glutamine 370 coordinates FAD.

It belongs to the MnmG family. As to quaternary structure, homodimer. Heterotetramer of two MnmE and two MnmG subunits. FAD serves as cofactor.

Its subcellular location is the cytoplasm. NAD-binding protein involved in the addition of a carboxymethylaminomethyl (cmnm) group at the wobble position (U34) of certain tRNAs, forming tRNA-cmnm(5)s(2)U34. This is tRNA uridine 5-carboxymethylaminomethyl modification enzyme MnmG from Cellvibrio japonicus (strain Ueda107) (Pseudomonas fluorescens subsp. cellulosa).